The chain runs to 129 residues: Lysozyme C (129 aa).

Residues Lys-1–Leu-129 enclose the C-type lysozyme domain. 4 disulfides stabilise this stretch: Cys-6–Cys-127, Cys-30–Cys-115, Cys-64–Cys-80, and Cys-76–Cys-94. Active-site residues include Glu-35 and Asp-52.

Belongs to the glycosyl hydrolase 22 family. Monomer.

It localises to the secreted. The catalysed reaction is Hydrolysis of (1-&gt;4)-beta-linkages between N-acetylmuramic acid and N-acetyl-D-glucosamine residues in a peptidoglycan and between N-acetyl-D-glucosamine residues in chitodextrins.. In terms of biological role, lysozymes have primarily a bacteriolytic function; those in tissues and body fluids are associated with the monocyte-macrophage system and enhance the activity of immunoagents. The protein is Lysozyme C (LYZ) of Ortalis vetula (Plain chachalaca).